The sequence spans 198 residues: Dephospho-CoA kinase (198 aa).

Positions 4 to 198 (RIGLTGGIAS…CGLRADGTTW (195 aa)) constitute a DPCK domain. 12 to 17 (ASGKSS) serves as a coordination point for ATP.

Belongs to the CoaE family.

Its subcellular location is the cytoplasm. The enzyme catalyses 3'-dephospho-CoA + ATP = ADP + CoA + H(+). It participates in cofactor biosynthesis; coenzyme A biosynthesis; CoA from (R)-pantothenate: step 5/5. Functionally, catalyzes the phosphorylation of the 3'-hydroxyl group of dephosphocoenzyme A to form coenzyme A. This chain is Dephospho-CoA kinase, found in Parasynechococcus marenigrum (strain WH8102).